Consider the following 315-residue polypeptide: Ribosomal RNA small subunit methyltransferase H (315 aa).

Residues 33-35 (GGH), Asp-52, Phe-84, Asp-106, and Gln-113 each bind S-adenosyl-L-methionine. The tract at residues 290–315 (PITASTSELENNNRSHSAKLRVAEKL) is disordered. The span at 292 to 304 (TASTSELENNNRS) shows a compositional bias: polar residues.

This sequence belongs to the methyltransferase superfamily. RsmH family.

It is found in the cytoplasm. It carries out the reaction cytidine(1402) in 16S rRNA + S-adenosyl-L-methionine = N(4)-methylcytidine(1402) in 16S rRNA + S-adenosyl-L-homocysteine + H(+). Specifically methylates the N4 position of cytidine in position 1402 (C1402) of 16S rRNA. The polypeptide is Ribosomal RNA small subunit methyltransferase H (Lactobacillus helveticus (strain DPC 4571)).